The sequence spans 436 residues: UPF0597 protein YhaM (436 aa).

It belongs to the UPF0597 family.

This is UPF0597 protein YhaM from Escherichia coli (strain 55989 / EAEC).